Here is a 1234-residue protein sequence, read N- to C-terminus: Chromosome-associated kinesin KIF4B (1234 aa).

The 328-residue stretch at 9-336 (PVRVALRCRP…LRYADRARKI (328 aa)) folds into the Kinesin motor domain. 88–95 (GQTGSGKT) is a binding site for ATP. A coiled-coil region spans residues 350–999 (ELNHLKQQVQ…IKQKLILLQV (650 aa)). Ser394 is subject to Phosphoserine. Disordered regions lie at residues 494–513 (EEAQVETSPETSRSSDAFTT) and 712–737 (KRLKDALQKQREVTDKRKETQSHGKE). Residues 498-513 (VETSPETSRSSDAFTT) show a composition bias toward polar residues. An interaction with PRC1 region spans residues 663-1234 (QWKQKKDKEV…GCSPIEEEAH (572 aa)). Positions 713-737 (RLKDALQKQREVTDKRKETQSHGKE) are enriched in basic and acidic residues. The short motif at 793 to 798 (PKLRKC) is the Nuclear localization signal element. Thr799 carries the post-translational modification Phosphothreonine. Residues Ser801, Ser951, Ser1001, Ser1013, Ser1017, and Ser1028 each carry the phosphoserine modification. Residues 1000–1234 (ASRQKHLPND…GCSPIEEEAH (235 aa)) are globular. 4 disordered regions span residues 1007–1030 (PNDTLLSPDSSFEYIPPKPKPSRV), 1052–1076 (VNEHEDGDGDGDSDEGDDEEWKPTK), 1122–1143 (RQQGKDSLGTVEQTQDSEGSFK), and 1183–1234 (TAPA…EEAH). The span at 1056–1071 (EDGDGDGDSDEGDDEE) shows a compositional bias: acidic residues. Positions 1086–1144 (QGCSCKGWCGNKQCGCRKQKSDCGVDCSCDPTKCRNRQQGKDSLGTVEQTQDSEGSFKL) are CRD; required for [4Fe-4S] cluster binding and localization to the spindle midzone and midbody during anaphase and telophase. Position 1128 is a phosphoserine (Ser1128). Thr1183 carries the post-translational modification Phosphothreonine. The residue at position 1188 (Ser1188) is a Phosphoserine. Lys1196 participates in a covalent cross-link: Glycyl lysine isopeptide (Lys-Gly) (interchain with G-Cter in SUMO2). Ser1227 is modified (phosphoserine).

The protein belongs to the TRAFAC class myosin-kinesin ATPase superfamily. Kinesin family. Chromokinesin subfamily. [2Fe-2S] cluster serves as cofactor. The cofactor is [4Fe-4S] cluster. In terms of tissue distribution, specifically expressed in testis.

Its subcellular location is the nucleus matrix. It localises to the cytoplasm. The protein resides in the cytoskeleton. Functionally, iron-sulfur (Fe-S) cluster binding motor protein that has a role in chromosome segregation during mitosis. Translocates PRC1 to the plus ends of interdigitating spindle microtubules during the metaphase to anaphase transition, an essential step for the formation of an organized central spindle midzone and midbody and for successful cytokinesis. May play a role in mitotic chromosomal positioning and bipolar spindle stabilization. The protein is Chromosome-associated kinesin KIF4B (KIF4B) of Homo sapiens (Human).